We begin with the raw amino-acid sequence, 156 residues long: Xanthocillin biosynthesis cluster protein D (156 aa).

N-linked (GlcNAc...) asparagine glycans are attached at residues Asn107 and Asn120. Residues 131 to 153 (IHLNAIALVATVWYGFTLSSSLL) traverse the membrane as a helical segment.

The protein localises to the membrane. It functions in the pathway secondary metabolite biosynthesis. Functionally, part of the gene cluster that mediates the biosynthesis of the isocyanide xanthocillin and its derivatives. The first step of the pathway consists in the conversion of tyrosine into a vinyl-isonitrile intermediate by the isocyanide synthase xanB. Subsequent oxidative dimerization of this intermediate to form xanthocillin may involve the cytochrome P450 monooxygenase xanG, whose expression is coregulated with that of XanB. Xanthocillin can be further modified by the isonitrile hydratase-like protein xanA which introduces N-formyl groups and the methyltransferase xanE which introduces methyl groups, leading to the production of several derivatives including fumiformamide. Finally, fumiformamide can be subject to both oxidative and reductive cyclization to yield melanocins E and F, respectively. The chain is Xanthocillin biosynthesis cluster protein D from Aspergillus fumigatus (strain ATCC MYA-4609 / CBS 101355 / FGSC A1100 / Af293) (Neosartorya fumigata).